A 1070-amino-acid polypeptide reads, in one-letter code: MTLQTNQTEKFTLPDLGKIQLQNFYNFLTKIIYKELKAFPKIYDSEHNFEFKIYPEEFFLVEPILNERESIYKSITYSTELYVTAELNCIKNQTKQKQKVLLGHIPLITSNGSFIINGISRAVVSQILRSPGIYFGSQLDSNSKCIYTATIISESGSRLKLEIDDRKLIWARISKKRKVSAIVLLLSMGIKLSDITRSIEHPAILDNILKKKNVLSNQKDAILEIYKQLFSAGGDPNFSDNILSELQRTFFQQRCEIGLIGRSNLNKKLGLNIPDEEIFLLPEDILATINYLIKLSLGIGSLDDIDHLKNRRVKSISDFLSEQLKNALNKIENTIEQSIKNISKRKRILTPKSLINSGILLAFFKDFFGSHPLSQFLDQTNSLTELVHKRRISSLGPGGLTRRTASFHVRDIHPSHYGRICPIETSEGMNAGLVASLASNATINTMGFIESPFYQLNDSSLFDKPIFLSAREDENFRIALGNRLAIDQEIQEKQITPARYKQEFINTPWSLANLRSIFPWQYFSIGASLIPFLEHDDANRALMGSNMQRQAVPLLITERPIVGTGFEANIARDSGAPLISNIDGKIQYLDSEFIEILGVDKKTYKLKLSNYQRSNNNTCIHHRAIVQLNQWVRKGQILADGATTIRGELSLGRNILVAYMPWEGYNFEDAVLISDRLIYDDLYTSIHIQKYELEIKINHQGQDKITKDIPHIDKYFLRHLDENGLVTLGSWVEAGDVLIGKLSSQEREDSLKVPEGKLLQAIFGLQIGNSRDTSLKLPAGGEGRVIDIQWIFQDEGGIDSNNFVNVYVLQKRRIQVGDKIAGRHGNKGIVSQILSRHDMPYLQNGTSIDMVLSPLGVPSRMNVGQILECLLGFAGKFLNKNYRITPFDERYEREASRKLVLSELHKAKKLTGYPWLLEPENAGKSRLFDGRTGETFNQPVTVGSAYILKLIHQVDDKIHARSTGPYSLVTQQPVRGRSRGGGQRVGEMEVWALEGFGAAYILQEMLTVKSDHIHSRYDVLGAIVTGTTIKTPTTTPESFRLLARELRCLGIQINDIEIYHETLQKKEIEI.

Belongs to the RNA polymerase beta chain family. In terms of assembly, in plastids the minimal PEP RNA polymerase catalytic core is composed of four subunits: alpha, beta, beta', and beta''. When a (nuclear-encoded) sigma factor is associated with the core the holoenzyme is formed, which can initiate transcription.

It localises to the plastid. The protein localises to the chloroplast. It carries out the reaction RNA(n) + a ribonucleoside 5'-triphosphate = RNA(n+1) + diphosphate. In terms of biological role, DNA-dependent RNA polymerase catalyzes the transcription of DNA into RNA using the four ribonucleoside triphosphates as substrates. The sequence is that of DNA-directed RNA polymerase subunit beta from Chaetosphaeridium globosum (Charophycean green alga).